The primary structure comprises 198 residues: RxLR effector protein CRE4 (198 aa).

An N-terminal signal peptide occupies residues 1 to 20; it reads MLRSFLLIVATVSLFGQCKP. Positions 43–52 match the RxLR-dEER motif; it reads RFVRTNDEER.

It belongs to the RxLR effector family.

It is found in the secreted. It localises to the host cytoplasm. The protein resides in the host nucleus. Its subcellular location is the host nucleolus. Effector that is involved in host plant infection. Contributes to virulence during the early infection stage, by inhibiting plant defense responses induced by both PAMP-triggered immunity (PTI) and effector-triggered immunity (ETI). This chain is RxLR effector protein CRE4 (CRE4), found in Phytophthora infestans (strain T30-4) (Potato late blight agent).